A 201-amino-acid chain; its full sequence is Protein GrpE (201 aa).

A disordered region spans residues 1-32; the sequence is MTDRDRQPEDTTAPTGEPVVSKPYIMPDDPEP.

The protein belongs to the GrpE family. As to quaternary structure, homodimer.

Its subcellular location is the cytoplasm. Participates actively in the response to hyperosmotic and heat shock by preventing the aggregation of stress-denatured proteins, in association with DnaK and GrpE. It is the nucleotide exchange factor for DnaK and may function as a thermosensor. Unfolded proteins bind initially to DnaJ; upon interaction with the DnaJ-bound protein, DnaK hydrolyzes its bound ATP, resulting in the formation of a stable complex. GrpE releases ADP from DnaK; ATP binding to DnaK triggers the release of the substrate protein, thus completing the reaction cycle. Several rounds of ATP-dependent interactions between DnaJ, DnaK and GrpE are required for fully efficient folding. This is Protein GrpE from Bradyrhizobium diazoefficiens (strain JCM 10833 / BCRC 13528 / IAM 13628 / NBRC 14792 / USDA 110).